The following is a 382-amino-acid chain: 1-deoxy-D-xylulose 5-phosphate reductoisomerase (382 aa).

Positions 10, 11, 12, 13, 36, 37, 38, and 121 each coordinate NADPH. Residue Lys122 participates in 1-deoxy-D-xylulose 5-phosphate binding. NADPH is bound at residue Glu123. Asp147 contributes to the Mn(2+) binding site. 1-deoxy-D-xylulose 5-phosphate-binding residues include Ser148, Glu149, Ser173, and His196. Mn(2+) is bound at residue Glu149. An NADPH-binding site is contributed by Gly202. The 1-deoxy-D-xylulose 5-phosphate site is built by Ser209, Asn214, Lys215, and Glu218. Glu218 is a Mn(2+) binding site.

It belongs to the DXR family. It depends on Mg(2+) as a cofactor. The cofactor is Mn(2+).

It catalyses the reaction 2-C-methyl-D-erythritol 4-phosphate + NADP(+) = 1-deoxy-D-xylulose 5-phosphate + NADPH + H(+). The protein operates within isoprenoid biosynthesis; isopentenyl diphosphate biosynthesis via DXP pathway; isopentenyl diphosphate from 1-deoxy-D-xylulose 5-phosphate: step 1/6. Functionally, catalyzes the NADPH-dependent rearrangement and reduction of 1-deoxy-D-xylulose-5-phosphate (DXP) to 2-C-methyl-D-erythritol 4-phosphate (MEP). The chain is 1-deoxy-D-xylulose 5-phosphate reductoisomerase from Halalkalibacterium halodurans (strain ATCC BAA-125 / DSM 18197 / FERM 7344 / JCM 9153 / C-125) (Bacillus halodurans).